A 628-amino-acid polypeptide reads, in one-letter code: Carbon monoxide dehydrogenase 1 (628 aa).

[4Fe-4S] cluster-binding residues include Cys44, Cys52, Cys53, Cys56, Cys61, and Cys75. [Ni-4Fe-5S] cluster-binding residues include His266, Cys302, Cys340, Cys448, Cys478, and Cys519.

The protein belongs to the Ni-containing carbon monoxide dehydrogenase family. In terms of assembly, homodimer. [4Fe-4S] cluster serves as cofactor. The cofactor is [Ni-4Fe-5S] cluster.

The catalysed reaction is CO + 2 oxidized [2Fe-2S]-[ferredoxin] + H2O = 2 reduced [2Fe-2S]-[ferredoxin] + CO2 + 2 H(+). Functionally, CODH oxidizes carbon monoxide coupled, via CooF, to the reduction of a hydrogen cation by a hydrogenase (possibly CooH). In Methanosarcina acetivorans (strain ATCC 35395 / DSM 2834 / JCM 12185 / C2A), this protein is Carbon monoxide dehydrogenase 1 (cooS1).